Consider the following 557-residue polypeptide: MPSDIEIARAATLKPIAQVAEKLGIPDEALHNYGKHIAKIDHDFIASLEGKPEGKLVLVTAISPTPAGEGKTTTTVGLGDALNRIGKRAVMCLREPSLGPCFGMKGGAAGGGKAQVVPMEQINLHFTGDFHAITSAHSLAAALIDNHIYWANELNIDVRRIHWRRVVDMNDRALRAINQSLGGVANGFPREDGFDITVASEVMAVFCLAKNLADLEERLGRIVIAETRDRKPVTLADVKATGAMTVLLKDALQPNLVQTLEGNPALIHGGPFANIAHGCNSVIATRTGLRLADYTVTEAGFGADLGAEKFIDIKCRQTGLKPSAVVIVATIRALKMHGGVNKKDLQAENLDALEKGFANLERHVNNVRSFGLPVVVGVNHFFQDTDAEHARLKELCRDRLQVEAITCKHWAEGGAGAEALAQAVVKLAEGEQKPLTFAYETETKITDKIKAIATKLYGAADIQIESKAATKLAGFEKDGYGGLPVCMAKTQYSFSTDPTLMGAPSGHLVSVRDVRLSAGAGFVVVICGEIMTMPGLPKVPAADTIRLDANGQIDGLF.

65–72 (TPAGEGKT) contributes to the ATP binding site.

This sequence belongs to the formate--tetrahydrofolate ligase family. Homotetramer.

The enzyme catalyses (6S)-5,6,7,8-tetrahydrofolate + formate + ATP = (6R)-10-formyltetrahydrofolate + ADP + phosphate. The protein operates within one-carbon metabolism; tetrahydrofolate interconversion. The chain is Formate--tetrahydrofolate ligase (fhs) from Methylorubrum extorquens (strain ATCC 14718 / DSM 1338 / JCM 2805 / NCIMB 9133 / AM1) (Methylobacterium extorquens).